The following is a 452-amino-acid chain: NADH-ubiquinone oxidoreductase chain 4 (452 aa).

14 helical membrane-spanning segments follow: residues 4 to 24 (LVLG…SMVW), 29 to 49 (VGSV…MTIS), 59 to 79 (FVSL…LLAS), 88 to 110 (LIYQ…LAFM), 114 to 136 (LLLF…TRWG), 144 to 164 (AGTY…ICLI), 182 to 202 (VFQL…AFLV), 221 to 241 (PIAG…YGMM), 252 to 272 (MLSS…MGGI), 282 to 304 (LIAY…GVAW), 309 to 331 (AMVL…NLWY), 345 to 365 (LIMI…MNMA), 390 to 410 (IVYM…LFGM), and 432 to 452 (LLTT…GLMF).

This sequence belongs to the complex I subunit 4 family.

It is found in the mitochondrion membrane. It catalyses the reaction a ubiquinone + NADH + 5 H(+)(in) = a ubiquinol + NAD(+) + 4 H(+)(out). Its function is as follows. Core subunit of the mitochondrial membrane respiratory chain NADH dehydrogenase (Complex I) that is believed to belong to the minimal assembly required for catalysis. Complex I functions in the transfer of electrons from NADH to the respiratory chain. The immediate electron acceptor for the enzyme is believed to be ubiquinone. This is NADH-ubiquinone oxidoreductase chain 4 (ND4) from Branchiostoma lanceolatum (Common lancelet).